The chain runs to 160 residues: MSIYHMKVRTITGKDMTLQPFAGKVLMIVNTASKCGFTSQLKQLQELYDTYQQEGLEILGFPCNQFMNQEPGEEADIQEFCETNYGVTFPMFSKVDVNGKNAHPLFVYLTEHAKGMLGTKAIKWNFTKFIVDRNGEIVGRYSPNTNPKELEDDIVKLLEQ.

C35 is a catalytic residue.

Belongs to the glutathione peroxidase family.

This Bacillus subtilis (strain 168) protein is Glutathione peroxidase homolog BsaA (bsaA).